The primary structure comprises 138 residues: Basic phospholipase A2 homolog bothropstoxin-II (138 aa).

The N-terminal stretch at 1-16 (MRTLWIMAVLLVGVEG) is a signal peptide. Intrachain disulfides connect Cys-42-Cys-131, Cys-44-Cys-60, Cys-59-Cys-111, Cys-65-Cys-138, Cys-66-Cys-104, Cys-73-Cys-97, and Cys-91-Cys-102. Positions 121-133 (KRYMAYPDVLCKK) are important for membrane-damaging activities in eukaryotes and bacteria; heparin-binding.

It belongs to the phospholipase A2 family. Group II subfamily. D49 sub-subfamily. In terms of assembly, homodimer; non-covalently linked (probable alternative/compact dimer conformation). As to expression, expressed by the venom gland.

The protein resides in the secreted. Its function is as follows. Snake venom phospholipase A2 (PLA2) that shows low enzymatic activity even tough it conserves the catalytic residues. Shows a strong myotoxic activity and induces indirect hemolysis, anticoagulant properties, and cytotoxic activities. In vivo, it induces muscle necrosis, accompanied by polymorphonuclear cell infiltration, and edema in the mouse paw. It exerts its function even in the absence of extracellular calcium, indicating it is not a calcium-dependent enzyme. A model of myotoxic mechanism has been proposed: an apo Lys49-PLA2 is activated by the entrance of a hydrophobic molecule (e.g. fatty acid) at the hydrophobic channel of the protein leading to a reorientation of a monomer. This reorientation causes a transition between 'inactive' to 'active' states, causing alignment of C-terminal and membrane-docking sites (MDoS) side-by-side and putting the membrane-disruption sites (MDiS) in the same plane, exposed to solvent and in a symmetric position for both monomers. The MDoS region stabilizes the toxin on membrane by the interaction of charged residues with phospholipid head groups. Subsequently, the MDiS region destabilizes the membrane with penetration of hydrophobic residues. This insertion causes a disorganization of the membrane, allowing an uncontrolled influx of ions (i.e. calcium and sodium), and eventually triggering irreversible intracellular alterations and cell death. The sequence is that of Basic phospholipase A2 homolog bothropstoxin-II from Bothrops jararacussu (Jararacussu).